Consider the following 159-residue polypeptide: Ribosomal RNA large subunit methyltransferase H (159 aa).

Residues Leu-76, Gly-108, and 127–132 (LSKMTY) each bind S-adenosyl-L-methionine.

It belongs to the RNA methyltransferase RlmH family. Homodimer.

The protein localises to the cytoplasm. It carries out the reaction pseudouridine(1915) in 23S rRNA + S-adenosyl-L-methionine = N(3)-methylpseudouridine(1915) in 23S rRNA + S-adenosyl-L-homocysteine + H(+). Specifically methylates the pseudouridine at position 1915 (m3Psi1915) in 23S rRNA. This Ruminiclostridium cellulolyticum (strain ATCC 35319 / DSM 5812 / JCM 6584 / H10) (Clostridium cellulolyticum) protein is Ribosomal RNA large subunit methyltransferase H.